The chain runs to 236 residues: Ribonuclease HII (236 aa).

Positions 27–219 (RILCGVDEAG…VRRALDGAPP (193 aa)) constitute an RNase H type-2 domain. 3 residues coordinate a divalent metal cation: aspartate 33, glutamate 34, and aspartate 128. Residues 212–236 (RALDGAPPPAGDAVPQTDAKTAWAD) form a disordered region.

It belongs to the RNase HII family. It depends on Mn(2+) as a cofactor. The cofactor is Mg(2+).

The protein resides in the cytoplasm. It catalyses the reaction Endonucleolytic cleavage to 5'-phosphomonoester.. Functionally, endonuclease that specifically degrades the RNA of RNA-DNA hybrids. The sequence is that of Ribonuclease HII from Ralstonia nicotianae (strain ATCC BAA-1114 / GMI1000) (Ralstonia solanacearum).